The sequence spans 950 residues: 2-oxoglutarate dehydrogenase E1 component (950 aa).

The protein belongs to the alpha-ketoglutarate dehydrogenase family. In terms of assembly, homodimer. Part of the 2-oxoglutarate dehydrogenase (OGDH) complex composed of E1 (2-oxoglutarate dehydrogenase), E2 (dihydrolipoamide succinyltransferase) and E3 (dihydrolipoamide dehydrogenase); the complex contains multiple copies of the three enzymatic components (E1, E2 and E3). It depends on thiamine diphosphate as a cofactor.

The enzyme catalyses N(6)-[(R)-lipoyl]-L-lysyl-[protein] + 2-oxoglutarate + H(+) = N(6)-[(R)-S(8)-succinyldihydrolipoyl]-L-lysyl-[protein] + CO2. In terms of biological role, E1 component of the 2-oxoglutarate dehydrogenase (OGDH) complex which catalyzes the decarboxylation of 2-oxoglutarate, the first step in the conversion of 2-oxoglutarate to succinyl-CoA and CO(2). This is 2-oxoglutarate dehydrogenase E1 component (odhA) from Cupriavidus necator (strain ATCC 17699 / DSM 428 / KCTC 22496 / NCIMB 10442 / H16 / Stanier 337) (Ralstonia eutropha).